A 131-amino-acid polypeptide reads, in one-letter code: Small ribosomal subunit protein uS8 (131 aa).

The protein belongs to the universal ribosomal protein uS8 family. Part of the 30S ribosomal subunit. Contacts proteins S5 and S12.

One of the primary rRNA binding proteins, it binds directly to 16S rRNA central domain where it helps coordinate assembly of the platform of the 30S subunit. This chain is Small ribosomal subunit protein uS8, found in Prosthecochloris aestuarii (strain DSM 271 / SK 413).